An 83-amino-acid chain; its full sequence is U5-theraphotoxin-Hs1a 1 (83 aa).

An N-terminal signal peptide occupies residues Met1–Ala21. The propeptide occupies Ser22–Arg49. Cystine bridges form between Cys51–Cys63, Cys56–Cys68, and Cys62–Cys75.

This sequence belongs to the neurotoxin 10 (Hwtx-1) family. 51 (Hntx-8) subfamily. Hntx-8 sub-subfamily. As to expression, expressed by the venom gland.

It is found in the secreted. Its function is as follows. Agglutinates human and mice erythrocytes. This activity can be specifically inhibited by mannosamine. This lectin shows very low toxicity in both mammals and insects. This is U5-theraphotoxin-Hs1a 1 from Cyriopagopus schmidti (Chinese bird spider).